Reading from the N-terminus, the 85-residue chain is Cell division protein ZapA (85 aa).

Residues 60–85 (AVNVVHDYLKLKEELERLKGQIKEKD) adopt a coiled-coil conformation.

Belongs to the ZapA family. Type 2 subfamily. Homodimer. Interacts with FtsZ.

It is found in the cytoplasm. Its function is as follows. Activator of cell division through the inhibition of FtsZ GTPase activity, therefore promoting FtsZ assembly into bundles of protofilaments necessary for the formation of the division Z ring. It is recruited early at mid-cell but it is not essential for cell division. The chain is Cell division protein ZapA from Bacillus licheniformis (strain ATCC 14580 / DSM 13 / JCM 2505 / CCUG 7422 / NBRC 12200 / NCIMB 9375 / NCTC 10341 / NRRL NRS-1264 / Gibson 46).